Reading from the N-terminus, the 218-residue chain is Attacin-B (218 aa).

Residues 1–17 form the signal peptide; the sequence is MQKTSILILALFAIAEA. Residues 18-28 constitute a propeptide that is removed on maturation; the sequence is VPTTGPIRVRR.

It belongs to the attacin/sarcotoxin-2 family. Hemolymph (at protein level).

It is found in the secreted. Functionally, hemolymph antibacterial protein. The sequence is that of Attacin-B (AttB) from Drosophila melanogaster (Fruit fly).